Consider the following 253-residue polypeptide: Snake venom serine protease homolog HS120 (253 aa).

Positions Met1–Ala18 are cleaved as a signal peptide. The propeptide occupies Gln19–Leu24. The Peptidase S1 domain maps to Val25–Ala244. 6 disulfide bridges follow: Cys31–Cys158, Cys49–Cys65, Cys98–Cys251, Cys137–Cys205, Cys169–Cys184, and Cys195–Cys220. Residues Asn116 and Asn165 are each glycosylated (N-linked (GlcNAc...) asparagine).

The protein belongs to the peptidase S1 family. Snake venom subfamily. In terms of tissue distribution, expressed by the venom gland.

It localises to the secreted. Its function is as follows. Snake venom serine protease homolog that may act in the hemostasis system of the prey. The polypeptide is Snake venom serine protease homolog HS120 (Bothrops jararaca (Jararaca)).